We begin with the raw amino-acid sequence, 407 residues long: Probable succinyl-diaminopimelate desuccinylase (407 aa).

A Zn(2+)-binding site is contributed by H72. The active site involves D74. D105 contacts Zn(2+). Residue E139 is the Proton acceptor of the active site. Zn(2+) is bound by residues E140, E165, and H378.

It belongs to the peptidase M20A family. Zn(2+) is required as a cofactor. It depends on Co(2+) as a cofactor.

The catalysed reaction is N-succinyl-(2S,6S)-2,6-diaminopimelate + H2O = (2S,6S)-2,6-diaminopimelate + succinate. It functions in the pathway amino-acid biosynthesis; L-lysine biosynthesis via DAP pathway; LL-2,6-diaminopimelate from (S)-tetrahydrodipicolinate (succinylase route): step 3/3. This is Probable succinyl-diaminopimelate desuccinylase (dapE) from Staphylococcus aureus (strain N315).